The sequence spans 185 residues: ATP-dependent protease subunit HslV (185 aa).

Residue Thr13 is part of the active site. Gly167, Cys170, and Thr173 together coordinate Na(+).

It belongs to the peptidase T1B family. HslV subfamily. In terms of assembly, a double ring-shaped homohexamer of HslV is capped on each side by a ring-shaped HslU homohexamer. The assembly of the HslU/HslV complex is dependent on binding of ATP.

It localises to the cytoplasm. It catalyses the reaction ATP-dependent cleavage of peptide bonds with broad specificity.. Allosterically activated by HslU binding. Functionally, protease subunit of a proteasome-like degradation complex believed to be a general protein degrading machinery. The protein is ATP-dependent protease subunit HslV of Sinorhizobium medicae (strain WSM419) (Ensifer medicae).